A 508-amino-acid chain; its full sequence is Maturase K (508 aa).

Belongs to the intron maturase 2 family. MatK subfamily.

Its subcellular location is the plastid. It is found in the chloroplast. Its function is as follows. Usually encoded in the trnK tRNA gene intron. Probably assists in splicing its own and other chloroplast group II introns. The chain is Maturase K from Marathrum schiedeanum.